Reading from the N-terminus, the 358-residue chain is tRNA-specific 2-thiouridylase MnmA (358 aa).

ATP contacts are provided by residues 7 to 14 and Met33; that span reads AMSGGVDS. Residue Cys102 is the Nucleophile of the active site. A disulfide bridge links Cys102 with Cys199. Position 126 (Gly126) interacts with ATP. The interaction with tRNA stretch occupies residues 149–151; that stretch reads KDQ. The active-site Cysteine persulfide intermediate is Cys199. Residues 305–306 are interaction with tRNA; the sequence is RY.

The protein belongs to the MnmA/TRMU family.

It is found in the cytoplasm. The catalysed reaction is S-sulfanyl-L-cysteinyl-[protein] + uridine(34) in tRNA + AH2 + ATP = 2-thiouridine(34) in tRNA + L-cysteinyl-[protein] + A + AMP + diphosphate + H(+). Functionally, catalyzes the 2-thiolation of uridine at the wobble position (U34) of tRNA, leading to the formation of s(2)U34. The protein is tRNA-specific 2-thiouridylase MnmA of Halothermothrix orenii (strain H 168 / OCM 544 / DSM 9562).